The following is a 333-amino-acid chain: Probable cytosolic iron-sulfur protein assembly protein ciao1-B (333 aa).

WD repeat units follow at residues 14-53, 59-98, 103-142, 148-187, 192-231, 246-285, and 297-333; these read HPDS…WECK, GHQR…FECL, GHEN…EYEC, SHTQ…WECR, GHTS…GGQE, FHGR…DPDQ, and AHTQ…QSGV.

The protein belongs to the WD repeat CIA1 family. As to quaternary structure, component of the CIA complex.

Its function is as follows. Key component of the cytosolic iron-sulfur protein assembly (CIA) complex, a multiprotein complex that mediates the incorporation of iron-sulfur cluster into extramitochondrial Fe/S proteins. This is Probable cytosolic iron-sulfur protein assembly protein ciao1-B (ciao1b) from Salmo salar (Atlantic salmon).